A 532-amino-acid polypeptide reads, in one-letter code: Protein PTST homolog 2, chloroplastic (532 aa).

The transit peptide at 1–71 (MVSINSGPIS…KPRKKSCCSR (71 aa)) directs the protein to the chloroplast. Disordered regions lie at residues 165–201 (QLPNCNSPEMDKTLNHGDLDLSSNLSSSTEQVESRND), 256–292 (EVDGSRGSGEYAQSRYQGAKSVSGKPGLSDSPTSETW), 314–347 (SSGLTGVKKDDTKKDSGDSMNGKDRIASSSEDVN), and 367–388 (HSLRSPPDKVVTSKDSETTAGN). The span at 173-183 (EMDKTLNHGDL) shows a compositional bias: basic and acidic residues. Over residues 320–339 (VKKDDTKKDSGDSMNGKDRI) the composition is skewed to basic and acidic residues. Residues 389–454 (LENLSDDWEY…ASRALRLLRT (66 aa)) are a coiled coil.

In terms of assembly, interacts with PTST3 and SS4. Interacts with MFP1; the interaction is essential for the initiation of starch granules biosynthesis in leaf chloroplasts, for the correct location of the process in the stromal spaces between the thylakoid membranes, and for the association of this protein with the thylakoid membranes. Interacts with PII1/MRC; the interaction is essential for the initiation of starch granules biosynthesis in leaf chloroplasts.

The protein resides in the plastid. Its subcellular location is the chloroplast. The protein localises to the chloroplast thylakoid membrane. Its function is as follows. Involved in starch granule initiation in leaf chloroplasts. Binds and delivers suitable maltooligosaccharide substrates to starch synthase 4 (SS4). The sequence is that of Protein PTST homolog 2, chloroplastic from Arabidopsis thaliana (Mouse-ear cress).